A 185-amino-acid polypeptide reads, in one-letter code: Mitochondrial inner membrane protease atp23 (185 aa).

Position 86 (H86) interacts with a divalent metal cation. E87 is a catalytic residue. H90 provides a ligand contact to a divalent metal cation.

This sequence belongs to the peptidase M76 family.

The protein resides in the mitochondrion inner membrane. Has a dual role in the assembly of mitochondrial ATPase. Acts as a protease that removes N-terminal residues of mitochondrial ATPase CF(0) subunit 6 at the intermembrane space side. Also involved in the correct assembly of the membrane-embedded ATPase CF(0) particle, probably mediating association of subunit 6 with the subunit 9 ring. This is Mitochondrial inner membrane protease atp23 (atp23) from Schizosaccharomyces pombe (strain 972 / ATCC 24843) (Fission yeast).